The chain runs to 402 residues: Phosphomevalonate dehydratase large subunit (402 aa).

(R)-5-phosphomevalonate-binding residues include G48, A49, S50, N79, and P80. C122 provides a ligand contact to [4Fe-4S] cluster. 2 residues coordinate (R)-5-phosphomevalonate: E145 and S146. Positions 297 and 356 each coordinate [4Fe-4S] cluster. Residue K377 coordinates (R)-5-phosphomevalonate.

The protein belongs to the AcnX type II large subunit family. As to quaternary structure, heterodimer composed of a large subunit (PMDh-L) and a small subunit (PMDh-S). [4Fe-4S] cluster is required as a cofactor.

It catalyses the reaction (R)-5-phosphomevalonate = (2E)-3-methyl-5-phosphooxypent-2-enoate + H2O. Its pathway is isoprenoid biosynthesis; isopentenyl diphosphate biosynthesis via mevalonate pathway. With respect to regulation, neither the addition of 1 mM Mg(2+) nor 1 mM Mn(2+) has a significant effect on the activity, whereas Zn(2+) causes almost complete inactivation. Strongly inhibited by H(2)O(2), but not by EDTA or iodoacetamide. In terms of biological role, component of a hydro-lyase that catalyzes the dehydration of mevalonate 5-phosphate (MVA5P) to form trans-anhydromevalonate 5-phosphate (tAHMP). Involved in the archaeal mevalonate (MVA) pathway, which provides fundamental precursors for isoprenoid biosynthesis, such as isopentenyl diphosphate (IPP) and dimethylallyl diphosphate (DMAPP). In Aeropyrum pernix (strain ATCC 700893 / DSM 11879 / JCM 9820 / NBRC 100138 / K1), this protein is Phosphomevalonate dehydratase large subunit.